The sequence spans 95 residues: Small ribosomal subunit protein uS19 (95 aa).

Residues 73 to 95 (EFSPTRTYRGHGADKNAKGSKKK) are disordered.

It belongs to the universal ribosomal protein uS19 family.

Functionally, protein S19 forms a complex with S13 that binds strongly to the 16S ribosomal RNA. The sequence is that of Small ribosomal subunit protein uS19 from Deinococcus radiodurans (strain ATCC 13939 / DSM 20539 / JCM 16871 / CCUG 27074 / LMG 4051 / NBRC 15346 / NCIMB 9279 / VKM B-1422 / R1).